The chain runs to 255 residues: F-box/SPRY domain-containing protein 1 (255 aa).

The F-box domain occupies 3-51 (DPVAALCNYNVLEVIFSYLELEDLNHCSQVCKSWYHFLNDENSDVWRWH). Residues 61–253 (LKSDLLASVS…VSMVYLGTPL (193 aa)) form the B30.2/SPRY domain.

This sequence belongs to the FBXO45/Fsn family. In terms of assembly, component of an E3 ubiquitin ligase complex composed of hiw and Fsn.

It localises to the synapse. It participates in protein modification; protein ubiquitination. Its function is as follows. Required in the presynaptic motoneuron to down-regulate the levels of wnd and restrain synaptic terminal growth at the neuromuscular junction (NMJ). The polypeptide is F-box/SPRY domain-containing protein 1 (Drosophila yakuba (Fruit fly)).